A 395-amino-acid chain; its full sequence is 1-deoxy-D-xylulose 5-phosphate reductoisomerase (395 aa).

The NADPH site is built by T10, G11, S12, I13, K37, and N123. K124 is a 1-deoxy-D-xylulose 5-phosphate binding site. Residue E125 participates in NADPH binding. D149 is a Mn(2+) binding site. The 1-deoxy-D-xylulose 5-phosphate site is built by S150, E151, S185, and H208. E151 lines the Mn(2+) pocket. G214 serves as a coordination point for NADPH. 4 residues coordinate 1-deoxy-D-xylulose 5-phosphate: S221, N226, K227, and E230. E230 provides a ligand contact to Mn(2+).

This sequence belongs to the DXR family. Mg(2+) serves as cofactor. Mn(2+) is required as a cofactor.

The catalysed reaction is 2-C-methyl-D-erythritol 4-phosphate + NADP(+) = 1-deoxy-D-xylulose 5-phosphate + NADPH + H(+). It functions in the pathway isoprenoid biosynthesis; isopentenyl diphosphate biosynthesis via DXP pathway; isopentenyl diphosphate from 1-deoxy-D-xylulose 5-phosphate: step 1/6. In terms of biological role, catalyzes the NADPH-dependent rearrangement and reduction of 1-deoxy-D-xylulose-5-phosphate (DXP) to 2-C-methyl-D-erythritol 4-phosphate (MEP). This chain is 1-deoxy-D-xylulose 5-phosphate reductoisomerase, found in Shewanella loihica (strain ATCC BAA-1088 / PV-4).